Here is a 290-residue protein sequence, read N- to C-terminus: tRNA (adenine(58)-N(1))-methyltransferase catalytic subunit TRMT61A (290 aa).

Ser2 is subject to N-acetylserine. Substrate regions lie at residues 20-22 (LGH), 35-42 (QTQTRHGV), 64-65 (GW), 85-89 (QILYS), and 110-117 (SGTGSGSV). S-adenosyl-L-methionine is bound by residues Leu87, 114 to 116 (SGS), Glu135, Arg140, 163 to 164 (DV), and Asp181. Substrate regions lie at residues 180–183 (LDIP) and 205–212 (SFSPCIEQ). Thr279 contacts substrate.

The protein belongs to the class I-like SAM-binding methyltransferase superfamily. TRM61 family. As to quaternary structure, heterotetramer; composed of two copies of TRMT6 and two copies of TRMT61A.

The protein resides in the nucleus. It catalyses the reaction adenosine(58) in tRNA + S-adenosyl-L-methionine = N(1)-methyladenosine(58) in tRNA + S-adenosyl-L-homocysteine + H(+). The catalysed reaction is an adenosine in mRNA + S-adenosyl-L-methionine = an N(1)-methyladenosine in mRNA + S-adenosyl-L-homocysteine + H(+). Functionally, catalytic subunit of tRNA (adenine-N(1)-)-methyltransferase, which catalyzes the formation of N(1)-methyladenine at position 58 (m1A58) in initiator methionyl-tRNA. Catalytic subunit of mRNA N(1)-methyltransferase complex, which mediates methylation of adenosine residues at the N(1) position of a small subset of mRNAs: N(1) methylation takes place in tRNA T-loop-like structures of mRNAs and is only present at low stoichiometries. The chain is tRNA (adenine(58)-N(1))-methyltransferase catalytic subunit TRMT61A (Trmt61a) from Rattus norvegicus (Rat).